The chain runs to 297 residues: F-actin-capping protein subunit beta (297 aa).

Basic and acidic residues predominate over residues 276–289 (DLSGKESDDKRQSE). The tract at residues 276 to 297 (DLSGKESDDKRQSELVKGLQSL) is disordered.

This sequence belongs to the F-actin-capping protein beta subunit family. As to quaternary structure, component of the F-actin capping complex, composed of a heterodimer of an alpha and a beta subunit.

The protein resides in the cytoplasm. It localises to the cytoskeleton. The protein localises to the actin patch. Functionally, F-actin-capping proteins bind in a Ca(2+)-independent manner to the fast growing ends of actin filaments (barbed end) thereby blocking the exchange of subunits at these ends. Unlike other capping proteins (such as gelsolin and severin), these proteins do not sever actin filaments. The sequence is that of F-actin-capping protein subunit beta (CAP2) from Debaryomyces hansenii (strain ATCC 36239 / CBS 767 / BCRC 21394 / JCM 1990 / NBRC 0083 / IGC 2968) (Yeast).